The following is a 329-amino-acid chain: NADH-quinone oxidoreductase subunit H (329 aa).

9 helical membrane passes run 9 to 29 (LIKI…ATYI), 42 to 62 (GPCY…IKLF), 75 to 95 (FIFT…MAPI), 117 to 137 (IGFL…ILAG), 154 to 174 (IQLL…LMVV), 188 to 208 (GGFL…FLIA), 238 to 258 (LKWG…SFVI), 269 to 291 (WGFI…LSMW), and 309 to 329 (WKIM…IILI).

Belongs to the complex I subunit 1 family. NDH-1 is composed of 14 different subunits. Subunits NuoA, H, J, K, L, M, N constitute the membrane sector of the complex.

The protein localises to the cell inner membrane. It catalyses the reaction a quinone + NADH + 5 H(+)(in) = a quinol + NAD(+) + 4 H(+)(out). NDH-1 shuttles electrons from NADH, via FMN and iron-sulfur (Fe-S) centers, to quinones in the respiratory chain. The immediate electron acceptor for the enzyme in this species is believed to be ubiquinone. Couples the redox reaction to proton translocation (for every two electrons transferred, four hydrogen ions are translocated across the cytoplasmic membrane), and thus conserves the redox energy in a proton gradient. This subunit may bind ubiquinone. The chain is NADH-quinone oxidoreductase subunit H from Helicobacter pylori (strain HPAG1).